The sequence spans 377 residues: Histone deacetylase 8 (377 aa).

Residues 14-324 (LPPVYIYSPE…WTYLTGVILG (311 aa)) form a histone deacetylase region. Phosphoserine is present on S39. D101 contributes to the substrate binding site. Residue H143 is the Proton acceptor of the active site. G151 contributes to the substrate binding site. A divalent metal cation-binding residues include D178, H180, and D267. Y306 serves as a coordination point for substrate.

The protein belongs to the histone deacetylase family. HD type 1 subfamily. Interacts with CBFA2T3. Interacts with phosphorylated SMG5/EST1B; this interaction protects SMG5 from ubiquitin-mediated degradation. Associates with alpha-SMA (smooth muscle alpha-actin). The cofactor is a divalent metal cation. Phosphorylated by PKA on serine 39. Phosphorylation reduces deacetylase activity observed preferentially on histones H3 and H4.

It localises to the nucleus. The protein localises to the chromosome. Its subcellular location is the cytoplasm. The enzyme catalyses N(6)-acetyl-L-lysyl-[histone] + H2O = L-lysyl-[histone] + acetate. It catalyses the reaction N(6)-acetyl-L-lysyl-[protein] + H2O = L-lysyl-[protein] + acetate. It carries out the reaction N(6)-(2E)-butenoyl-L-lysyl-[protein] + H2O = (2E)-2-butenoate + L-lysyl-[protein]. Its activity is inhibited by trichostatin A (TSA) and butyrate, 2 well known histone deacetylase inhibitors. Functionally, histone deacetylase that catalyzes the deacetylation of lysine residues on the N-terminal part of the core histones (H2A, H2B, H3 and H4). Histone deacetylation gives a tag for epigenetic repression and plays an important role in transcriptional regulation, cell cycle progression and developmental events. Histone deacetylases act via the formation of large multiprotein complexes. Also involved in the deacetylation of cohesin complex protein SMC3 regulating release of cohesin complexes from chromatin. May play a role in smooth muscle cell contractility. In addition to protein deacetylase activity, also has protein-lysine deacylase activity: acts as a protein decrotonylase by mediating decrotonylation ((2E)-butenoyl) of histones. The polypeptide is Histone deacetylase 8 (Hdac8) (Rattus norvegicus (Rat)).